Reading from the N-terminus, the 209-residue chain is Kynurenine formamidase (209 aa).

Trp20 contacts substrate. His50, His54, and Asp56 together coordinate Zn(2+). His60 functions as the Proton donor/acceptor in the catalytic mechanism. His161 and Glu173 together coordinate Zn(2+).

Belongs to the Cyclase 1 superfamily. KynB family. Homodimer. It depends on Zn(2+) as a cofactor.

The catalysed reaction is N-formyl-L-kynurenine + H2O = L-kynurenine + formate + H(+). It participates in amino-acid degradation; L-tryptophan degradation via kynurenine pathway; L-kynurenine from L-tryptophan: step 2/2. Its function is as follows. Catalyzes the hydrolysis of N-formyl-L-kynurenine to L-kynurenine, the second step in the kynurenine pathway of tryptophan degradation. This Bacillus cytotoxicus (strain DSM 22905 / CIP 110041 / 391-98 / NVH 391-98) protein is Kynurenine formamidase.